The primary structure comprises 324 residues: Phospho-N-acetylmuramoyl-pentapeptide-transferase (324 aa).

10 helical membrane passes run 5 to 25 (VILFTIIMGFLISVLISPILI), 50 to 70 (GTPTMGGVMIIVSIAITAIVM), 77 to 97 (LSAEMFLLLFVTIGYGLLGFL), 117 to 137 (LIGQIIIAIVFYGVYHYCHFS), 147 to 167 (LSIDLGWGYFILVLFMLVGGS), 176 to 196 (LDGLLSGTAAIAFGAFAILAW), 203 to 223 (VAIFSVAVVGAVLGFLVFNAH), 227 to 247 (VFMGDTGSLALGGAIVTVAIL), 250 to 270 (LEILLVIIGGVFVIETLSVIL), and 302 to 322 (VVVTFWTAGLLLAVLGIYIEV).

This sequence belongs to the glycosyltransferase 4 family. MraY subfamily. Mg(2+) serves as cofactor.

It is found in the cell membrane. It carries out the reaction UDP-N-acetyl-alpha-D-muramoyl-L-alanyl-gamma-D-glutamyl-meso-2,6-diaminopimeloyl-D-alanyl-D-alanine + di-trans,octa-cis-undecaprenyl phosphate = di-trans,octa-cis-undecaprenyl diphospho-N-acetyl-alpha-D-muramoyl-L-alanyl-D-glutamyl-meso-2,6-diaminopimeloyl-D-alanyl-D-alanine + UMP. Its pathway is cell wall biogenesis; peptidoglycan biosynthesis. Its function is as follows. Catalyzes the initial step of the lipid cycle reactions in the biosynthesis of the cell wall peptidoglycan: transfers peptidoglycan precursor phospho-MurNAc-pentapeptide from UDP-MurNAc-pentapeptide onto the lipid carrier undecaprenyl phosphate, yielding undecaprenyl-pyrophosphoryl-MurNAc-pentapeptide, known as lipid I. This chain is Phospho-N-acetylmuramoyl-pentapeptide-transferase, found in Bacillus velezensis (strain DSM 23117 / BGSC 10A6 / LMG 26770 / FZB42) (Bacillus amyloliquefaciens subsp. plantarum).